The sequence spans 240 residues: Ribosomal RNA large subunit methyltransferase E (240 aa).

Residues 1–28 (MSSSPRSPDARPLKVRVKSARTRSSSSQ) are disordered. Residues Gly80, Trp82, Asp103, Asp119, and Asp143 each contribute to the S-adenosyl-L-methionine site. The active-site Proton acceptor is the Lys183.

The protein belongs to the class I-like SAM-binding methyltransferase superfamily. RNA methyltransferase RlmE family.

The protein resides in the cytoplasm. It carries out the reaction uridine(2552) in 23S rRNA + S-adenosyl-L-methionine = 2'-O-methyluridine(2552) in 23S rRNA + S-adenosyl-L-homocysteine + H(+). In terms of biological role, specifically methylates the uridine in position 2552 of 23S rRNA at the 2'-O position of the ribose in the fully assembled 50S ribosomal subunit. This Azorhizobium caulinodans (strain ATCC 43989 / DSM 5975 / JCM 20966 / LMG 6465 / NBRC 14845 / NCIMB 13405 / ORS 571) protein is Ribosomal RNA large subunit methyltransferase E.